Reading from the N-terminus, the 105-residue chain is Iron-sulfur cluster assembly protein CyaY (105 aa).

Belongs to the frataxin family.

Functionally, involved in iron-sulfur (Fe-S) cluster assembly. May act as a regulator of Fe-S biogenesis. The chain is Iron-sulfur cluster assembly protein CyaY from Psychromonas ingrahamii (strain DSM 17664 / CCUG 51855 / 37).